We begin with the raw amino-acid sequence, 313 residues long: Porphobilinogen deaminase (313 aa).

Cysteine 242 carries the S-(dipyrrolylmethanemethyl)cysteine modification.

The protein belongs to the HMBS family. As to quaternary structure, monomer. Dipyrromethane is required as a cofactor.

The enzyme catalyses 4 porphobilinogen + H2O = hydroxymethylbilane + 4 NH4(+). The protein operates within porphyrin-containing compound metabolism; protoporphyrin-IX biosynthesis; coproporphyrinogen-III from 5-aminolevulinate: step 2/4. Functionally, tetrapolymerization of the monopyrrole PBG into the hydroxymethylbilane pre-uroporphyrinogen in several discrete steps. The protein is Porphobilinogen deaminase of Pseudomonas aeruginosa (strain LESB58).